Reading from the N-terminus, the 206-residue chain is Putative metal transport protein HI_1621 (206 aa).

A run of 6 helical transmembrane segments spans residues 6 to 26 (GVLH…GIAV), 38 to 58 (LTAL…PVGI), 72 to 92 (FLGW…VIFF), 94 to 114 (FGGF…AVIA), 136 to 156 (IGAG…VLML), and 165 to 185 (LVWL…IISV).

The protein belongs to the CbiM family.

It is found in the cell membrane. In terms of biological role, may be involved in metal transport. The sequence is that of Putative metal transport protein HI_1621 from Haemophilus influenzae (strain ATCC 51907 / DSM 11121 / KW20 / Rd).